The sequence spans 328 residues: Malate dehydrogenase (328 aa).

Gly-12 to Gly-18 contributes to the NAD(+) binding site. The substrate site is built by Arg-95 and Arg-101. NAD(+) is bound by residues Asn-108, Gln-115, and Val-132 to Asn-134. Positions 134 and 165 each coordinate substrate. The Proton acceptor role is filled by His-190.

The protein belongs to the LDH/MDH superfamily. MDH type 2 family.

The catalysed reaction is (S)-malate + NAD(+) = oxaloacetate + NADH + H(+). Catalyzes the reversible oxidation of malate to oxaloacetate. The protein is Malate dehydrogenase of Methylibium petroleiphilum (strain ATCC BAA-1232 / LMG 22953 / PM1).